Consider the following 101-residue polypeptide: Small ribosomal subunit protein bS18c (101 aa).

Belongs to the bacterial ribosomal protein bS18 family. In terms of assembly, component of the chloroplast small ribosomal subunit (SSU). Mature 70S chloroplast ribosomes of higher plants consist of a small (30S) and a large (50S) subunit. The 30S small subunit contains 1 molecule of ribosomal RNA (16S rRNA) and 24 different proteins. The 50S large subunit contains 3 rRNA molecules (23S, 5S and 4.5S rRNA) and 33 different proteins.

It localises to the plastid. It is found in the chloroplast. Functionally, component of the chloroplast ribosome (chloro-ribosome), a dedicated translation machinery responsible for the synthesis of chloroplast genome-encoded proteins, including proteins of the transcription and translation machinery and components of the photosynthetic apparatus. The chain is Small ribosomal subunit protein bS18c (RPS18) from Spinacia oleracea (Spinach).